A 67-amino-acid polypeptide reads, in one-letter code: Prokaryotic ubiquitin-like protein Pup (67 aa).

A compositionally biased stretch (low complexity) spans 1-11 (MAGQEQQQPQS). Residues 1–47 (MAGQEQQQPQSRESEFEDDAPATPPAPGEAQASAATQGVDDLLDEID) are disordered. Positions 25–61 (PAPGEAQASAATQGVDDLLDEIDGVLESNAEEFVRAF) are ARC ATPase binding. Residue Q67 is modified to Deamidated glutamine. Q67 is covalently cross-linked (Isoglutamyl lysine isopeptide (Gln-Lys) (interchain with K-? in acceptor proteins)).

This sequence belongs to the prokaryotic ubiquitin-like protein family. As to quaternary structure, strongly interacts with the proteasome-associated ATPase ARC through a hydrophobic interface; the interacting region of Pup lies in its C-terminal half. There is one Pup binding site per ARC hexamer ring. In terms of processing, is modified by deamidation of its C-terminal glutamine to glutamate by the deamidase Dop, a prerequisite to the subsequent pupylation process.

It functions in the pathway protein degradation; proteasomal Pup-dependent pathway. Its function is as follows. Protein modifier that is covalently attached to lysine residues of substrate proteins, thereby targeting them for proteasomal degradation. The tagging system is termed pupylation. In Arthrobacter sp. (strain FB24), this protein is Prokaryotic ubiquitin-like protein Pup.